The following is a 151-amino-acid chain: Melatonin receptor type 1C (151 aa).

Topologically, residues 1–13 are cytoplasmic; the sequence is CHSLRYDRLYSRR. The helical transmembrane segment at 14–34 threads the bilayer; it reads NTCLYLLLTWMLTALATVPNF. Residues 35 to 58 lie on the Extracellular side of the membrane; the sequence is LVGSLKYDPRVFSCTFTQTASSSY. The chain crosses the membrane as a helical span at residues 59 to 79; sequence TVCVVLIHFLVPLGVVSFCYL. Residues 80 to 109 are Cytoplasmic-facing; that stretch reads RIWTLVIRVKGRVRPNPKVRAADLRNFLTM. The chain crosses the membrane as a helical span at residues 110-130; it reads FVVFVLFAVCWAPLNFIGLAV. Over 131–143 the chain is Extracellular; sequence AINPAKVAPNIPE. The helical transmembrane segment at 144-151 threads the bilayer; the sequence is WLFVTSYF.

The protein belongs to the G-protein coupled receptor 1 family.

The protein resides in the cell membrane. Functionally, high affinity receptor for melatonin. The activity of this receptor is mediated by pertussis toxin sensitive G proteins that inhibits adenylate cyclase activity. The protein is Melatonin receptor type 1C (mtnr1c) of Danio rerio (Zebrafish).